The following is a 734-amino-acid chain: Adhesion G protein-coupled receptor E5 (734 aa).

An N-terminal signal peptide occupies residues 1 to 26; sequence MGGPHGGPFLLFHVLCFLLTLSEVGS. Topologically, residues 27-449 are extracellular; the sequence is QNSKACALPC…VEDPKLALIT (423 aa). Positions 28-70 constitute an EGF-like 1 domain; the sequence is NSKACALPCPPNSSCVNGTACRCAPGFISFSGEIFTDPLESCD. Disulfide bonds link Cys32-Cys42, Cys36-Cys48, Cys50-Cys69, Cys75-Cys89, Cys83-Cys98, Cys100-Cys121, Cys127-Cys140, Cys134-Cys149, and Cys151-Cys170. N-linked (GlcNAc...) asparagine glycans are attached at residues Asn39 and Asn44. In terms of domain architecture, EGF-like 2; calcium-binding spans 71–122; sequence DINECGPPSPVDCGSSADCQNTEGGYYCTCSPGYEPVSGAMIFRNESENTCR. Asn115 and Asn136 each carry an N-linked (GlcNAc...) asparagine glycan. Positions 123-171 constitute an EGF-like 3; calcium-binding domain; sequence DVDECSSGQHQCHNSTVCFNTVGSYTCHCREGWEPKHGLKNKQKDTICK. Residues 265 to 441 form the GAIN-B domain; that stretch reads TYRSLDNTEL…AILMAHYDVE (177 aa). N-linked (GlcNAc...) asparagine glycosylation is found at Asn285, Asn327, Asn372, Asn403, and Asn418. 2 disulfides stabilise this stretch: Cys393–Cys423 and Cys411–Cys425. The segment at 393–441 is GPS; it reads CAFWKKDSNGNGSWATTGCWKMGRGNGSITCQCSHLSSFAILMAHYDVE. The chain crosses the membrane as a helical span at residues 450-470; that stretch reads KVGLALSLACLLLCILTFLLV. Residues 471 to 478 lie on the Cytoplasmic side of the membrane; sequence RPIQGSRT. The chain crosses the membrane as a helical span at residues 479–499; it reads TVHLHLCICLFVGSAIFLAGI. Residues 500-519 lie on the Extracellular side of the membrane; the sequence is ENEGGEVGTRCRLVAVLLHY. The chain crosses the membrane as a helical span at residues 520 to 540; that stretch reads CFLAAFCWMSLEGVELYFLVV. Over 541 to 550 the chain is Cytoplasmic; that stretch reads RVFQGQGMRK. The chain crosses the membrane as a helical span at residues 551 to 571; it reads LWLCLIGYGVPLIIVGISAGA. Residues 572 to 593 lie on the Extracellular side of the membrane; sequence YSKGYGREKFCWLNFEGGFLWS. A helical transmembrane segment spans residues 594-614; it reads FVGPVTFIVLGNAIIFVITVW. The Cytoplasmic portion of the chain corresponds to 615–637; the sequence is KLTQKFSEINPDIKKLKKARVLT. The helical transmembrane segment at 638–658 threads the bilayer; that stretch reads ITAIAQLFVLGCTWVFGLLLF. At 659 to 662 the chain is on the extracellular side; that stretch reads NPES. Residues 663-683 form a helical membrane-spanning segment; sequence WVLSYIFSILNCLQGFFLFVL. At 684–734 the chain is on the cytoplasmic side; the sequence is YCLLNKKVREEYRKWACMVAGNKYSEFATTTSGSGSSHNQTQALRPSESGM. The tract at residues 712–734 is disordered; it reads TTTSGSGSSHNQTQALRPSESGM. The residue at position 713 (Thr713) is a Phosphothreonine. Phosphoserine is present on Ser715. Thr724 bears the Phosphothreonine mark. 2 positions are modified to phosphoserine: Ser730 and Ser732.

This sequence belongs to the G-protein coupled receptor 2 family. LN-TM7 subfamily. In terms of assembly, forms a heterodimer, consisting of a large extracellular region (alpha subunit) non-covalently linked to a seven-transmembrane moiety (beta subunit). Interacts with complement decay-accelerating factor (DAF) and with chondroitin sulfate. Post-translationally, proteolytically cleaved into 2 subunits, an extracellular alpha subunit and a seven-transmembrane subunit.

The protein localises to the cell membrane. Its subcellular location is the secreted. It is found in the extracellular space. Its function is as follows. Receptor potentially involved in both adhesion and signaling processes early after leukocyte activation. Plays an essential role in leukocyte migration. The polypeptide is Adhesion G protein-coupled receptor E5 (Bos taurus (Bovine)).